The primary structure comprises 303 residues: MIRHFLALNQFTKEELDGLFTLSRELKDKQKQGVPHRLLEGKSVALIFEKSSTRTRVSFEVGVAQLGAHPLFISSATSQMGRGEPIKDTARVMARYCDGVMIRTYGQEIVEEFARYSSVPVINGLTDLFHPCQIMADLFTVIEYKGGYQGLKFAWVGDGNNMANTWIEAAAILGFDLALACPTGYEPDRQVWDWAQQRATSSITITEDPEEAVRDADVVNTDVWASMGQEQEQKEREAAFQGYCLDDALVALARPDCMVLHCLPAHRGEEITDSVIEGPRSAVWDEAENRLHIQKAIMASLMK.

Residues 52–55, Q79, R103, and 130–133 each bind carbamoyl phosphate; these read STRT and HPCQ. Residues N161, D222, and 226–227 contribute to the L-ornithine site; that span reads SM. Carbamoyl phosphate is bound by residues 262-263 and R290; that span reads CL.

The protein belongs to the aspartate/ornithine carbamoyltransferase superfamily. OTCase family.

It localises to the cytoplasm. The enzyme catalyses carbamoyl phosphate + L-ornithine = L-citrulline + phosphate + H(+). Its pathway is amino-acid biosynthesis; L-arginine biosynthesis; L-arginine from L-ornithine and carbamoyl phosphate: step 1/3. Reversibly catalyzes the transfer of the carbamoyl group from carbamoyl phosphate (CP) to the N(epsilon) atom of ornithine (ORN) to produce L-citrulline. The protein is Ornithine carbamoyltransferase of Geobacter sulfurreducens (strain ATCC 51573 / DSM 12127 / PCA).